A 342-amino-acid chain; its full sequence is Succinylglutamate desuccinylase (342 aa).

Positions 64, 67, and 159 each coordinate Zn(2+). The active site involves glutamate 222.

It belongs to the AspA/AstE family. Succinylglutamate desuccinylase subfamily. The cofactor is Zn(2+).

The catalysed reaction is N-succinyl-L-glutamate + H2O = L-glutamate + succinate. The protein operates within amino-acid degradation; L-arginine degradation via AST pathway; L-glutamate and succinate from L-arginine: step 5/5. Its function is as follows. Transforms N(2)-succinylglutamate into succinate and glutamate. This Burkholderia orbicola (strain AU 1054) protein is Succinylglutamate desuccinylase.